The primary structure comprises 142 residues: Hemoglobin subunit alpha-A (142 aa).

The Globin domain occupies 2-142 (VLSAADKTNV…VGTVLTAKYR (141 aa)). H59 contributes to the O2 binding site. Position 88 (H88) interacts with heme b.

It belongs to the globin family. As to quaternary structure, heterotetramer of two alpha chains and two beta chains. As to expression, red blood cells.

In terms of biological role, involved in oxygen transport from the lung to the various peripheral tissues. The sequence is that of Hemoglobin subunit alpha-A (HBAA) from Coturnix japonica (Japanese quail).